A 570-amino-acid chain; its full sequence is Peptidyl-prolyl cis-trans isomerase FKBP9 (570 aa).

A signal peptide spans 1–24 (MAFRGWRPPPPPLLLLLLWVTGQA). 4 consecutive PPIase FKBP-type domains span residues 54–142 (GDFV…MDIW), 166–254 (SDFV…LDLH), 278–365 (GDFL…IDFH), and 389–477 (GDYL…LELV). 4 N-linked (GlcNAc...) asparagine glycosylation sites follow: Asn174, Asn286, Asn302, and Asn397. EF-hand domains are found at residues 488–523 (WNGE…QVAS) and 533–568 (DAEL…AKHD). Ca(2+)-binding residues include Asp501, Asp503, Asn505, Glu507, Glu512, Asp546, Asn548, Asp550, Lys552, and Glu557. The Prevents secretion from ER motif lies at 567–570 (HDEL).

Post-translationally, phosphorylated.

It is found in the endoplasmic reticulum. It catalyses the reaction [protein]-peptidylproline (omega=180) = [protein]-peptidylproline (omega=0). Its activity is regulated as follows. Inhibited by FK506. In terms of biological role, PPIases accelerate the folding of proteins during protein synthesis. In Homo sapiens (Human), this protein is Peptidyl-prolyl cis-trans isomerase FKBP9 (FKBP9).